Reading from the N-terminus, the 703-residue chain is DnaJ homolog subfamily C member 14 (703 aa).

Disordered stretches follow at residues 1-150 (MAQK…DGSS) and 164-229 (EDEE…RKRS). The segment covering 17–28 (SGGSSLITSGSS) has biased composition (low complexity). Residues 75-84 (HGPPRGPGPP) show a composition bias toward pro residues. Composition is skewed to acidic residues over residues 89–102 (YPDE…ESGV) and 164–176 (EDEE…DDEE). The span at 193–202 (PPSRRQRHRF) shows a compositional bias: basic residues. Over residues 203–218 (LTKEDVRDSGRRDPKA) the composition is skewed to basic and acidic residues. Residues 219–228 (PGRHRLARKR) are compositionally biased toward basic residues. Helical transmembrane passes span 254-274 (WWLI…GYLI), 305-325 (VMFQ…IRLL), and 327-347 (VVGA…QLGW). The J domain maps to 444–508 (NPFHVLGVEA…ERRKEYEMKR (65 aa)). Disordered stretches follow at residues 622-643 (FGSR…PPAD) and 659-703 (MSNG…PFQR). Positions 673-684 (GTTSTSRPNSSV) are enriched in polar residues. Residues 691 to 703 (PKRRKKVRRPFQR) show a composition bias toward basic residues.

Interacts with the FxxxFxxxF motif of DRD1 via its C-terminal domain. As to expression, detected in heart, brain, lung, liver, skeletal muscle, kidney and testis.

It localises to the endoplasmic reticulum membrane. Its function is as follows. Regulates the export of target proteins, such as DRD1, from the endoplasmic reticulum to the cell surface. The polypeptide is DnaJ homolog subfamily C member 14 (Dnajc14) (Rattus norvegicus (Rat)).